Consider the following 192-residue polypeptide: Adenylate kinase (192 aa).

Residue 10-15 (GAGKGT) coordinates ATP. Residues 30–56 (GTGGMLRALEPESGEQIHLRIDRGHFA) are NMP. AMP is bound by residues T31, R36, 82-85 (GFPR), and Q89. Residues 123–133 (KRGETENRADD) are LID. R124 lines the ATP pocket. Positions 130 and 141 each coordinate AMP. D169 serves as a coordination point for ATP.

The protein belongs to the adenylate kinase family. As to quaternary structure, monomer.

Its subcellular location is the cytoplasm. The enzyme catalyses AMP + ATP = 2 ADP. The protein operates within purine metabolism; AMP biosynthesis via salvage pathway; AMP from ADP: step 1/1. Catalyzes the reversible transfer of the terminal phosphate group between ATP and AMP. Plays an important role in cellular energy homeostasis and in adenine nucleotide metabolism. The polypeptide is Adenylate kinase (Rhodopirellula baltica (strain DSM 10527 / NCIMB 13988 / SH1)).